The following is a 404-amino-acid chain: Iron-sulfur assembly protein IscA2 (404 aa).

Residues 244–289 are a coiled coil; that stretch reads KEEDEKKLDKLLKKRNIKKRDIVTITEEAKEELKKIISINKKENNN.

Belongs to the HesB/IscA family. Dimer. Homotetramer. Interacts with ABCB6.

The protein resides in the mitochondrion. It functions in the pathway cofactor biosynthesis; iron-sulfur cluster biosynthesis. In terms of biological role, participates in iron-sulfur cluster formation (ISC) pathway for iron-sulfur (Fe-S) cluster biogenesis. Can bind and transfer [4Fe-4S] clusters to target apo-proteins. The sequence is that of Iron-sulfur assembly protein IscA2 from Plasmodium falciparum (isolate 3D7).